A 106-amino-acid chain; its full sequence is Protamine (106 aa).

The interval 1–106 is disordered; sequence ARAVRRRRAR…TRRRRRRARR (106 aa).

As to expression, sperm.

The protein resides in the nucleus. It localises to the chromosome. This Phorcus turbinatus (Sea snail) protein is Protamine.